A 114-amino-acid polypeptide reads, in one-letter code: T cell receptor alpha variable 10 (114 aa).

Residues 1–21 (MKKHLTTFLVILWLYFYRGNG) form the signal peptide. In terms of domain architecture, Ig-like spans 23-114 (NQVEQSPQSL…DSASYICVVS (92 aa)). N-linked (GlcNAc...) asparagine glycans are attached at residues Asn-39 and Asn-45. A disulfide bond links Cys-44 and Cys-111.

As to quaternary structure, alpha-beta TR is a heterodimer composed of an alpha and beta chain; disulfide-linked. The alpha-beta TR is associated with the transmembrane signaling CD3 coreceptor proteins to form the TR-CD3 (TcR or TCR). The assembly of alpha-beta TR heterodimers with CD3 occurs in the endoplasmic reticulum where a single alpha-beta TR heterodimer associates with one CD3D-CD3E heterodimer, one CD3G-CD3E heterodimer and one CD247 homodimer forming a stable octameric structure. CD3D-CD3E and CD3G-CD3E heterodimers preferentially associate with TR alpha and TR beta chains, respectively. The association of the CD247 homodimer is the last step of TcR assembly in the endoplasmic reticulum and is required for transport to the cell surface.

Its subcellular location is the cell membrane. Functionally, v region of the variable domain of T cell receptor (TR) alpha chain that participates in the antigen recognition. Alpha-beta T cell receptors are antigen specific receptors which are essential to the immune response and are present on the cell surface of T lymphocytes. Recognize peptide-major histocompatibility (MH) (pMH) complexes that are displayed by antigen presenting cells (APC), a prerequisite for efficient T cell adaptive immunity against pathogens. Binding of alpha-beta TR to pMH complex initiates TR-CD3 clustering on the cell surface and intracellular activation of LCK that phosphorylates the ITAM motifs of CD3G, CD3D, CD3E and CD247 enabling the recruitment of ZAP70. In turn ZAP70 phosphorylates LAT, which recruits numerous signaling molecules to form the LAT signalosome. The LAT signalosome propagates signal branching to three major signaling pathways, the calcium, the mitogen-activated protein kinase (MAPK) kinase and the nuclear factor NF-kappa-B (NF-kB) pathways, leading to the mobilization of transcription factors that are critical for gene expression and essential for T cell growth and differentiation. The T cell repertoire is generated in the thymus, by V-(D)-J rearrangement. This repertoire is then shaped by intrathymic selection events to generate a peripheral T cell pool of self-MH restricted, non-autoaggressive T cells. Post-thymic interaction of alpha-beta TR with the pMH complexes shapes TR structural and functional avidity. This chain is T cell receptor alpha variable 10, found in Homo sapiens (Human).